We begin with the raw amino-acid sequence, 641 residues long: Macrolide export ATP-binding/permease protein MacB (641 aa).

The ABC transporter domain occupies I2–P240. G38–S45 is an ATP binding site. 4 helical membrane-spanning segments follow: residues F268–A288, L516–I536, F565–Y585, and I601–F621.

This sequence belongs to the ABC transporter superfamily. Macrolide exporter (TC 3.A.1.122) family. Homodimer.

It localises to the cell inner membrane. In terms of biological role, non-canonical ABC transporter that contains transmembrane domains (TMD), which form a pore in the inner membrane, and an ATP-binding domain (NBD), which is responsible for energy generation. Confers resistance against macrolides. This chain is Macrolide export ATP-binding/permease protein MacB, found in Campylobacter fetus subsp. fetus (strain 82-40).